The sequence spans 900 residues: MKWTTDKVRQTWLDYFTAKGHLALPSKSLIPVNDPSLLWINSGVATLKDYFSAKKTPPSKRLANAQICLRVNDIENVGFTSRHQTLFEMLGNFSIGDYFKEEAIGFANDLLVNHYHLDPKRFYITVYQDDELTFNTWLKHGIPASRIIKCDRDRNFWDLGLGPCGPCTEIYYDRGERFDPHKVGEKLFFEDIENDRYVEVWNIVFSQFNNDGNGNYSELAQKNIDTGAGIERLVAILQDAPTNFDTDIFLKLIGIIEQHCKHKYDTNLYFKFDQKLNEAQSAFRIISDHFKAITFTIAEGVLPGPNERSYIVRRLLRRALLACKKLDLDLKFIDPMVDAIISVYGSYYQQLQGKNQVVQQAIWKEVTAFDKTINLGLMLFEKSIAHNALQPQVAFQLYETYGFPIEMIKELVDKRQLQVDWKAVEQLMEQHRLISKQNSNTLSFEKQNEHLVNFKTASEFLYEANEITAKVIGLFDEQYQPVQKLHNQSGYVVFDQTVLYATSGGQRYDEGYCINHSQNDQRVSFQGVFKGPNKQHFHFFLTGSFQLGDKVILVHDGKWRQLVKNNHSLEHLLHAALQNEIDPLIKQDGAFKSAQKATIDFNFSRALTWAELERVEHRIRQIIQQDIQREEIFTDLEGSQKLNAIAYFEEEYSNHELLRVIRFGDFSVELCGGTHVEHTGLIENCFITDYYARGTGRWRIEIISSNETIAAYLNEQNGKLSETINSLHNTLNNIANPALNKQKTALTKQLNHFHLPQVITDLRKCQALLNELKITVNELKTEDFKWKQKQLAEKIKQELLELAKQDKAYVLASFAAVDPKLLSQVAQAVLNQHKNKLFVLLNQFNNSPSFMLLGQDVSKCIQLLKAHFELKGGGSNNFFRGSFNESVDVSKLQAILDTLQ.

Residues His567, His571, Cys671, and His675 each coordinate Zn(2+).

Belongs to the class-II aminoacyl-tRNA synthetase family. Zn(2+) serves as cofactor.

The protein localises to the cytoplasm. It catalyses the reaction tRNA(Ala) + L-alanine + ATP = L-alanyl-tRNA(Ala) + AMP + diphosphate. Functionally, catalyzes the attachment of alanine to tRNA(Ala) in a two-step reaction: alanine is first activated by ATP to form Ala-AMP and then transferred to the acceptor end of tRNA(Ala). Also edits incorrectly charged Ser-tRNA(Ala) and Gly-tRNA(Ala) via its editing domain. The chain is Alanine--tRNA ligase from Mycoplasma pneumoniae (strain ATCC 29342 / M129 / Subtype 1) (Mycoplasmoides pneumoniae).